The sequence spans 336 residues: Potassium channel subfamily K member 1 (336 aa).

Residues 1–20 lie on the Cytoplasmic side of the membrane; sequence MLQSLAGSSCVRLVERHRSA. Residues 21-41 form a helical membrane-spanning segment; that stretch reads WCFGFLVLGYLLYLVFGAVVF. Over 42–103 the chain is Extracellular; that stretch reads SSVELPYEDL…SNASGNWNWD (62 aa). An N-linked (GlcNAc...) asparagine glycan is attached at N95. The segment at residues 104–116 is an intramembrane region (helical); sequence FTSALFFASTVLS. The stretch at 117–122 is an intramembrane region; that stretch reads TTGYGH. The segment at 117–122 is selectivity filter 1; sequence TTGYGH. The Extracellular segment spans residues 123–132; the sequence is TVPLSDGGKA. The chain crosses the membrane as a helical span at residues 133-156; it reads FCIIYSVIGIPFTLLFLTAVVQRI. The Cytoplasmic portion of the chain corresponds to 157-181; that stretch reads TVHVTRRPVLYFHIRWGFSKQVVAI. The chain crosses the membrane as a helical span at residues 182-202; sequence VHAVLLGFVTVSCFFFIPAAV. Topologically, residues 203 to 211 are extracellular; the sequence is FSVLEDDWN. The helical intramembrane region spans 212 to 224; the sequence is FLESFYFCFISLS. A selectivity filter 2 region spans residues 225 to 230; it reads TIGLGD. An intramembrane segment occupies 225–231; the sequence is TIGLGDY. At 232-243 the chain is on the extracellular side; sequence VPGEGYNQKFRE. Residues 244-267 form a helical membrane-spanning segment; the sequence is LYKIGITCYLLLGLIAMLVVLETF. Residues 268–336 are Cytoplasmic-facing; that stretch reads CELHELKKFR…SACVDGPANH (69 aa). K274 participates in a covalent cross-link: Glycyl lysine isopeptide (Lys-Gly) (interchain with G-Cter in SUMO). The segment at 293–299 is important for intracellular retention in recycling endosomes; the sequence is IIEHDQL. S326 is modified (phosphoserine).

The protein belongs to the two pore domain potassium channel (TC 1.A.1.8) family. As to quaternary structure, homodimer; disulfide-linked. Heterodimer with KCNK2; disulfide-linked. In astrocytes, forms mostly heterodimeric potassium channels with KCNK2, with only a minor proportion of functional channels containing homodimeric KCNK1. Interacts with KCNK3 and KCNK9, forming functional heterodimeric channels. Interacts with GNG4. Identified in a complex with PSD and ARF6; interacts only with PSD that is bound to ARF6. Interacts with UBE2I. Post-translationally, sumoylation is controversial. Sumoylated by UBE2I. Not sumoylated when expressed in xenopus oocytes or mammalian cells. Sumoylation inactivates the channel, but does not interfere with expression at the cell membrane. Sumoylation of a single subunit is sufficient to silence the dimeric channel. Sumoylation of KCNK1 is sufficient to silence heterodimeric channels formed by KCNK1 and KCNK3 or KCNK9. Desumoylated by SENP1; this activates the channel. Desumoylated by SENP1; this strongly increases halothane-mediated activation of heterodimeric channels formed with KCNK9. SENP1 treatment has no effect. In terms of tissue distribution, detected in bronchial epithelial cells. Detected in heart left atrium and left ventricle. Detected in cardiac myocytes (at protein level). Widely expressed with high levels in heart, brain and kidney, and lower levels in colon, ovary, placenta, lung and liver. Highly expressed in cerebellum, and detected at lower levels in amygdala, caudate nucleus, brain cortex, hippocampus, putamen, substantia nigra, thalamus, dorsal root ganglion, spinal cord, pituitary, heart, kidney, lung, placenta, pancreas, stomach, small intestine, uterus and prostate. Detected in right and left heart ventricle and atrium, and in heart Purkinje fibers.

The protein resides in the cell membrane. It is found in the recycling endosome. The protein localises to the synaptic cell membrane. Its subcellular location is the cytoplasmic vesicle. It localises to the perikaryon. The protein resides in the cell projection. It is found in the dendrite. The protein localises to the apical cell membrane. It carries out the reaction K(+)(in) = K(+)(out). The enzyme catalyses NH4(+)(in) = NH4(+)(out). The catalysed reaction is Na(+)(in) = Na(+)(out). It catalyses the reaction Rb(+)(in) = Rb(+)(out). It carries out the reaction Cs(+)(in) = Cs(+)(out). The enzyme catalyses Li(+)(in) = Li(+)(out). The catalysed reaction is L-glutamate(out) = L-glutamate(in). It catalyses the reaction chloride(in) = chloride(out). Inhibited by Ba(2+) ions and quinidine. Inhibited by quinine. Is slightly inhibited by 10 mM tetraethylammonium (TEA), and only marginally inhibited by 4-aminopyridine, charybdotoxin and dendrotoxin. Lowering the extracellular pH to below 6.5 transiently activates the channel, and then inhibits channel activity. Inhibited when the intracellular pH is decreased down to pH 6.0, but this may be due to indirect effects. Its function is as follows. Ion channel that contributes to passive transmembrane potassium transport and to the regulation of the resting membrane potential in brain astrocytes, but also in kidney and in other tissues. Forms dimeric channels through which potassium ions pass in accordance with their electrochemical gradient. The channel is selective for K(+) ions at physiological potassium concentrations and at neutral pH, but becomes permeable to Na(+) at subphysiological K(+) levels and upon acidification of the extracellular medium. The homodimer has very low potassium channel activity, when expressed in heterologous systems, and can function as weakly inward rectifying potassium channel. Channel activity is modulated by activation of serotonin receptors. Heterodimeric channels containing KCNK1 and KCNK2 have much higher activity, and may represent the predominant form in astrocytes. Heterodimeric channels containing KCNK1 and KCNK3 or KCNK9 have much higher activity. Heterodimeric channels formed by KCNK1 and KCNK9 may contribute to halothane-sensitive currents. Mediates outward rectifying potassium currents in dentate gyrus granule cells and contributes to the regulation of their resting membrane potential. Contributes to the regulation of action potential firing in dentate gyrus granule cells and down-regulates their intrinsic excitability. In astrocytes, the heterodimer formed by KCNK1 and KCNK2 is required for rapid glutamate release in response to activation of G-protein coupled receptors, such as F2R and CNR1. Required for normal ion and water transport in the kidney. Contributes to the regulation of the resting membrane potential of pancreatic beta cells. The low channel activity of homodimeric KCNK1 may be due to sumoylation. The low channel activity may be due to rapid internalization from the cell membrane and retention in recycling endosomes. Permeable to monovalent cations with ion selectivity for K(+) &gt; Rb(+) &gt;&gt; NH4(+) &gt;&gt; Cs(+) = Na(+) = Li(+). The chain is Potassium channel subfamily K member 1 (KCNK1) from Homo sapiens (Human).